The chain runs to 367 residues: Anhydro-N-acetylmuramic acid kinase (367 aa).

Glycine 11–aspartate 18 contacts ATP.

Belongs to the anhydro-N-acetylmuramic acid kinase family.

The enzyme catalyses 1,6-anhydro-N-acetyl-beta-muramate + ATP + H2O = N-acetyl-D-muramate 6-phosphate + ADP + H(+). It participates in amino-sugar metabolism; 1,6-anhydro-N-acetylmuramate degradation. It functions in the pathway cell wall biogenesis; peptidoglycan recycling. Its function is as follows. Catalyzes the specific phosphorylation of 1,6-anhydro-N-acetylmuramic acid (anhMurNAc) with the simultaneous cleavage of the 1,6-anhydro ring, generating MurNAc-6-P. Is required for the utilization of anhMurNAc either imported from the medium or derived from its own cell wall murein, and thus plays a role in cell wall recycling. The polypeptide is Anhydro-N-acetylmuramic acid kinase (Rhodopseudomonas palustris (strain ATCC BAA-98 / CGA009)).